Consider the following 492-residue polypeptide: 5-taurinomethyluridine-[tRNA] synthase subunit GTPB3, mitochondrial (492 aa).

The transit peptide at methionine 1–cysteine 20 directs the protein to the mitochondrion. The 5,10-methylenetetrahydrofolate site is built by arginine 52, glutamate 112, and lysine 152. Residues glycine 249–alanine 416 enclose the TrmE-type G domain. GTP is bound by residues glycine 256–serine 263, glycine 282–aspartate 286, aspartate 303–glycine 306, asparagine 374–aspartate 377, and serine 397–leucine 399. Asparagine 259 provides a ligand contact to K(+). 2 residues coordinate Mg(2+): serine 263 and threonine 284. Lysine 492 contacts 5,10-methylenetetrahydrofolate.

The protein belongs to the TRAFAC class TrmE-Era-EngA-EngB-Septin-like GTPase superfamily. TrmE GTPase family. Homodimer; forms a dimer in the presence of potassium. Interacts with MTO1; forms the GTPBP3-MTO1 complex composed of homodimers of GTPBP3 and MTO1. In terms of assembly, homodimer, forms homodimer in vivo. It depends on K(+) as a cofactor. As to expression, ubiquitously expressed.

Its subcellular location is the mitochondrion. The protein localises to the cytoplasm. The catalysed reaction is GTP + H2O = GDP + phosphate + H(+). GTPase component of the GTPBP3-MTO1 complex that catalyzes the 5-taurinomethyluridine (taum(5)U) modification at the 34th wobble position (U34) of mitochondrial tRNAs (mt-tRNAs), which plays a role in mt-tRNA decoding and mitochondrial translation. Taum(5)U formation on mammalian mt-tRNA requires the presence of both GTPBP3-mediated GTPase activity and MTO1 catalytic activity. The protein is 5-taurinomethyluridine-[tRNA] synthase subunit GTPB3, mitochondrial of Homo sapiens (Human).